The sequence spans 943 residues: Sodium- and chloride-dependent GABA transporter ine (943 aa).

Over 1–345 the chain is Cytoplasmic; it reads MAENKDVSQV…RQQHWANKMQ (345 aa). The tract at residues 103 to 122 is disordered; sequence HKQSPLRHTSVRTRPSSEVL. 3 consecutive transmembrane segments (helical) span residues 346-366, 373-393, and 418-438; these read FVLA…FPYM, GVFL…LLFM, and GAGL…SVII. Residues 439–510 lie on the Extracellular side of the membrane; the sequence is GYSIYYFFTS…GLEYPGMMRW (72 aa). Residue asparagine 476 is glycosylated (N-linked (GlcNAc...) asparagine). Transmembrane regions (helical) follow at residues 511-531, 539-559, 591-607, 618-638, 679-699, 723-743, 754-774, 799-819, and 836-856; these read ELFA…WKSI, YFTA…AVTL, FNSL…FASY, TVAV…FAFS, WAVM…FAIV, IVVL…IIQG, YAAS…IAWF, CWLV…LINY, and YGIG…YAVI. Over 857 to 943 the chain is Cytoplasmic; the sequence is NFLRSSGDTF…HAEAGGPCGQ (87 aa).

It belongs to the sodium:neurotransmitter symporter (SNF) (TC 2.A.22) family. In terms of tissue distribution, expressed both maternally and zygotically. Developing embryos exhibit expression in the posterior hindgut, foregut, midgut, Malpighian tubules, anal plate, Garland cells, and a subset of cells in the central nervous system. Central nervous system expression is seen in segmentally repeating in cells flanking the midline of the ventral ganglion. Isoform A and isoform B are colocalized in both the nervous system and the fluid reabsorption system.

It localises to the membrane. Its function is as follows. Plays a role in neuronal membrane excitation, important for normal response properties of the photoreceptor. Able to control excitability from either neurons or glia cells. Ine negatively regulates neuronal sodium channels. Controls neurotransmitter-mediated signaling pathways associated with the structure of the larval peripheral nerve, ine and eag control perineurial glial growth through partially redundant pathways. Isoform A and isoform B are both functional, although isoform A functions with greater efficiency. Has a role in osmolyte transport within the Malpighian tubule and hindgut. This chain is Sodium- and chloride-dependent GABA transporter ine, found in Drosophila melanogaster (Fruit fly).